The primary structure comprises 486 residues: Cardiolipin synthase A (486 aa).

The next 2 helical transmembrane spans lie at 3–23 and 38–58; these read IFYNLIKCLIFSTYWLLIANI and MSWLLTIYIIPFIGISIWFFF. PLD phosphodiesterase domains follow at residues 219–246 and 399–426; these read VDVRQHRKIILIDNYIAYSGSMNLVDPY and QKGLLHSKSILVDQQLSLIGTVNLDMRS. Catalysis depends on residues histidine 224, lysine 226, aspartate 231, histidine 404, lysine 406, and aspartate 411.

The protein belongs to the phospholipase D family. Cardiolipin synthase subfamily. ClsA sub-subfamily.

It localises to the cell inner membrane. It carries out the reaction 2 a 1,2-diacyl-sn-glycero-3-phospho-(1'-sn-glycerol) = a cardiolipin + glycerol. Functionally, catalyzes the reversible phosphatidyl group transfer from one phosphatidylglycerol molecule to another to form cardiolipin (CL) (diphosphatidylglycerol) and glycerol. The polypeptide is Cardiolipin synthase A (Buchnera aphidicola subsp. Acyrthosiphon pisum (strain 5A)).